The primary structure comprises 338 residues: MEKVCVLGAGSWGSALAMVLAENGHDTLVWTHRAEQAEEINRMHTNKKYLPETVLPTNLHATSDIAKAATHAETIVVAVPTKAIREVCEKLTAELTKKVLFVHVSKGIEPDSLKRISEILAESLPAEKVDEIVVLSGPSHAEEVVLHHPTTVTAACADIDAAEKVQDLFMNQFFRVYTNDDVIGVEIGGALKNVIALAAGITDGLNYGDNAKAALITRGLAEITRLGVKMGGNPFTFSGLTGMGDLIVTCTSVHSRNWRAGNMLGQGMKLQEVLDQMGMVVEGVRTTKAAYQLAEKYGVAMPISTELYSVLFNDVEPKVAVDALMMRMKKREIDEMKH.

The NADPH site is built by Ser11, Trp12, His32, Arg33, and Lys106. Sn-glycerol 3-phosphate contacts are provided by Lys106, Gly137, and Ser139. Ala141 contributes to the NADPH binding site. Lys192, Asp245, Ser255, Arg256, and Asn257 together coordinate sn-glycerol 3-phosphate. Lys192 functions as the Proton acceptor in the catalytic mechanism. Arg256 is a binding site for NADPH. Positions 280 and 282 each coordinate NADPH.

This sequence belongs to the NAD-dependent glycerol-3-phosphate dehydrogenase family.

The protein resides in the cytoplasm. It carries out the reaction sn-glycerol 3-phosphate + NAD(+) = dihydroxyacetone phosphate + NADH + H(+). The enzyme catalyses sn-glycerol 3-phosphate + NADP(+) = dihydroxyacetone phosphate + NADPH + H(+). The protein operates within membrane lipid metabolism; glycerophospholipid metabolism. Its function is as follows. Catalyzes the reduction of the glycolytic intermediate dihydroxyacetone phosphate (DHAP) to sn-glycerol 3-phosphate (G3P), the key precursor for phospholipid synthesis. This is Glycerol-3-phosphate dehydrogenase [NAD(P)+] from Lysinibacillus sphaericus (strain C3-41).